Reading from the N-terminus, the 137-residue chain is SMR2 protein (137 aa).

The signal sequence occupies residues 1 to 18; sequence MLVVLLTAALLALSSAQN. Positions 14 to 113 are disordered; that stretch reads SSAQNTDEEV…LHHRENLRPQ (100 aa). Residues 75 to 85 are compositionally biased toward low complexity; it reads QQQQPLPVENQ. Residues 99 to 110 show a composition bias toward basic and acidic residues; it reads PPPETLHHRENL.

The protein resides in the secreted. Unknown, male-specific function. In Rattus norvegicus (Rat), this protein is SMR2 protein (Smr2).